Here is an 831-residue protein sequence, read N- to C-terminus: Phenylalanine--tRNA ligase beta subunit (831 aa).

The tRNA-binding domain maps to G44–A155. In terms of domain architecture, B5 spans W414–S489. Mg(2+) is bound by residues D467, D473, E476, and E477. The region spanning S737–R830 is the FDX-ACB domain.

The protein belongs to the phenylalanyl-tRNA synthetase beta subunit family. Type 1 subfamily. In terms of assembly, tetramer of two alpha and two beta subunits. It depends on Mg(2+) as a cofactor.

It localises to the cytoplasm. It catalyses the reaction tRNA(Phe) + L-phenylalanine + ATP = L-phenylalanyl-tRNA(Phe) + AMP + diphosphate + H(+). This is Phenylalanine--tRNA ligase beta subunit (pheT) from Mycobacterium tuberculosis (strain ATCC 25618 / H37Rv).